The primary structure comprises 62 residues: MRQLPGKAAKETRKMKRERKQQNKEGHNRVVTVAIPVCLAVFVMLIVYVYSATSKHRKWARR.

Residues 1–27 are disordered; it reads MRQLPGKAAKETRKMKRERKQQNKEGH. Positions 9 to 31 form a coiled coil; that stretch reads AKETRKMKRERKQQNKEGHNRVV. A helical transmembrane segment spans residues 30–50; the sequence is VVTVAIPVCLAVFVMLIVYVY.

It belongs to the SMCO4 family.

It localises to the membrane. In Nematostella vectensis (Starlet sea anemone), this protein is Single-pass membrane and coiled-coil domain-containing protein 4 homolog.